The following is a 345-amino-acid chain: GDSL esterase/lipase At1g23500 (345 aa).

A signal peptide spans 1 to 24 (MNFSLLSTMLMALSSVCLFFVGYA). Serine 42 (nucleophile) is an active-site residue. A glycan (N-linked (GlcNAc...) asparagine) is linked at asparagine 103. Catalysis depends on residues aspartate 320 and histidine 323.

This sequence belongs to the 'GDSL' lipolytic enzyme family.

The protein resides in the secreted. The polypeptide is GDSL esterase/lipase At1g23500 (Arabidopsis thaliana (Mouse-ear cress)).